Reading from the N-terminus, the 357-residue chain is Probable leucine aminopeptidase ARB_00576 (357 aa).

The signal sequence occupies residues Met1–Ala15. N-linked (GlcNAc...) asparagine glycosylation occurs at Asn76. His167 and Asp185 together coordinate Zn(2+). The segment at Asp169–Ser188 is disordered. Asn186 is a glycosylation site (N-linked (GlcNAc...) asparagine). Zn(2+)-binding residues include Glu224 and Asp251. Asn269 carries N-linked (GlcNAc...) asparagine glycosylation. The cysteines at positions 291 and 295 are disulfide-linked. His324 is a binding site for Zn(2+).

It belongs to the peptidase M28 family. M28E subfamily. In terms of assembly, monomer. Requires Zn(2+) as cofactor.

Its subcellular location is the secreted. In terms of biological role, probable extracellular aminopeptidase which contributes to pathogenicity. The chain is Probable leucine aminopeptidase ARB_00576 from Arthroderma benhamiae (strain ATCC MYA-4681 / CBS 112371) (Trichophyton mentagrophytes).